The following is a 214-amino-acid chain: Large ribosomal subunit protein uL3 (214 aa).

The segment at 131–153 is disordered; that stretch reads KSQRASHGNSRSHNVPGSIGMAQ. The segment covering 132–145 has biased composition (polar residues); that stretch reads SQRASHGNSRSHNV. At Q153 the chain carries N5-methylglutamine.

Belongs to the universal ribosomal protein uL3 family. As to quaternary structure, part of the 50S ribosomal subunit. Forms a cluster with proteins L14 and L19. Methylated by PrmB.

Its function is as follows. One of the primary rRNA binding proteins, it binds directly near the 3'-end of the 23S rRNA, where it nucleates assembly of the 50S subunit. The chain is Large ribosomal subunit protein uL3 from Thiobacillus denitrificans (strain ATCC 25259 / T1).